The sequence spans 456 residues: Bifunctional protein GlmU (456 aa).

The segment at 1 to 229 (MLNNAMSVVI…LSEVEGVNNR (229 aa)) is pyrophosphorylase. Residues 11-14 (LAAG), Lys-25, Gln-76, 81-82 (GT), 103-105 (YGD), Gly-140, Glu-154, Asn-169, and Asn-227 each bind UDP-N-acetyl-alpha-D-glucosamine. Asp-105 lines the Mg(2+) pocket. Asn-227 lines the Mg(2+) pocket. The segment at 230 to 250 (LQLSRLERVYQSEQAEKLLLA) is linker. The tract at residues 251-456 (GVMLRDPARF…EGWRRPVKKK (206 aa)) is N-acetyltransferase. Residues Arg-333 and Lys-351 each contribute to the UDP-N-acetyl-alpha-D-glucosamine site. The active-site Proton acceptor is His-363. Tyr-366 and Asn-377 together coordinate UDP-N-acetyl-alpha-D-glucosamine. Residues Ala-380, 386–387 (NY), Ser-405, Ala-423, and Arg-440 each bind acetyl-CoA.

This sequence in the N-terminal section; belongs to the N-acetylglucosamine-1-phosphate uridyltransferase family. It in the C-terminal section; belongs to the transferase hexapeptide repeat family. In terms of assembly, homotrimer. The cofactor is Mg(2+).

It is found in the cytoplasm. It carries out the reaction alpha-D-glucosamine 1-phosphate + acetyl-CoA = N-acetyl-alpha-D-glucosamine 1-phosphate + CoA + H(+). The catalysed reaction is N-acetyl-alpha-D-glucosamine 1-phosphate + UTP + H(+) = UDP-N-acetyl-alpha-D-glucosamine + diphosphate. Its pathway is nucleotide-sugar biosynthesis; UDP-N-acetyl-alpha-D-glucosamine biosynthesis; N-acetyl-alpha-D-glucosamine 1-phosphate from alpha-D-glucosamine 6-phosphate (route II): step 2/2. It participates in nucleotide-sugar biosynthesis; UDP-N-acetyl-alpha-D-glucosamine biosynthesis; UDP-N-acetyl-alpha-D-glucosamine from N-acetyl-alpha-D-glucosamine 1-phosphate: step 1/1. The protein operates within bacterial outer membrane biogenesis; LPS lipid A biosynthesis. Functionally, catalyzes the last two sequential reactions in the de novo biosynthetic pathway for UDP-N-acetylglucosamine (UDP-GlcNAc). The C-terminal domain catalyzes the transfer of acetyl group from acetyl coenzyme A to glucosamine-1-phosphate (GlcN-1-P) to produce N-acetylglucosamine-1-phosphate (GlcNAc-1-P), which is converted into UDP-GlcNAc by the transfer of uridine 5-monophosphate (from uridine 5-triphosphate), a reaction catalyzed by the N-terminal domain. The chain is Bifunctional protein GlmU from Escherichia coli O157:H7 (strain EC4115 / EHEC).